The sequence spans 310 residues: tRNA-cytidine(32) 2-sulfurtransferase (310 aa).

The short motif at 45 to 50 (SGGKDS) is the PP-loop motif element. Cys-120, Cys-123, and Cys-211 together coordinate [4Fe-4S] cluster.

It belongs to the TtcA family. In terms of assembly, homodimer. Mg(2+) serves as cofactor. [4Fe-4S] cluster is required as a cofactor.

The protein localises to the cytoplasm. The enzyme catalyses cytidine(32) in tRNA + S-sulfanyl-L-cysteinyl-[cysteine desulfurase] + AH2 + ATP = 2-thiocytidine(32) in tRNA + L-cysteinyl-[cysteine desulfurase] + A + AMP + diphosphate + H(+). It functions in the pathway tRNA modification. Its function is as follows. Catalyzes the ATP-dependent 2-thiolation of cytidine in position 32 of tRNA, to form 2-thiocytidine (s(2)C32). The sulfur atoms are provided by the cysteine/cysteine desulfurase (IscS) system. In Shewanella baltica (strain OS155 / ATCC BAA-1091), this protein is tRNA-cytidine(32) 2-sulfurtransferase.